We begin with the raw amino-acid sequence, 301 residues long: Probable deoxyhypusine synthase 1 (301 aa).

K269 serves as the catalytic Nucleophile.

Belongs to the deoxyhypusine synthase family. It depends on NAD(+) as a cofactor.

The catalysed reaction is [eIF5A protein]-L-lysine + spermidine = [eIF5A protein]-deoxyhypusine + propane-1,3-diamine. Its pathway is protein modification; eIF5A hypusination. Catalyzes the NAD-dependent oxidative cleavage of spermidine and the subsequent transfer of the butylamine moiety of spermidine to the epsilon-amino group of a specific lysine residue of the eIF-5A precursor protein to form the intermediate deoxyhypusine residue. The protein is Probable deoxyhypusine synthase 1 (dys1) of Archaeoglobus fulgidus (strain ATCC 49558 / DSM 4304 / JCM 9628 / NBRC 100126 / VC-16).